The primary structure comprises 373 residues: Putative C-P lyase subunit protein HtxH (373 aa).

Belongs to the PhnI family.

In terms of biological role, belongs to an operon involved in hypophosphite oxidation. Exact function not known. This Stutzerimonas stutzeri (Pseudomonas stutzeri) protein is Putative C-P lyase subunit protein HtxH (htxH).